We begin with the raw amino-acid sequence, 1491 residues long: Pleckstrin homology domain-containing family H member 2 (1491 aa).

Residues 19–177 (ALEAQLMKFR…ELQEKKISCV (159 aa)) are a coiled coil. Disordered regions lie at residues 232–435 (AEKP…PFQP), 506–546 (DDGL…LHRF), and 612–668 (SSSP…SDYA). Polar residues predominate over residues 253–264 (TSCSSEQNQKTR). Residues 374–385 (KEQDSSSDELNK) are compositionally biased toward basic and acidic residues. A compositionally biased stretch (polar residues) spans 392 to 406 (LDYTSSSSEANTPSP). The segment covering 657 to 666 (SDSSAASESD) has biased composition (low complexity). PH domains lie at 702 to 796 (PLEK…SVLR) and 810 to 918 (KPAV…VAAG). The MyTH4 domain occupies 954–1109 (HSKEGILSPL…PSRMEILSTL (156 aa)). The FERM domain maps to 1120-1449 (FSIPVHFMNG…SYINSFHQQK (330 aa)). The interval 1466 to 1491 (QAPQARVMGSQPPLSNSRPTKGPTLL) is disordered.

Self-associates. Interacts with TGFB1I1. Expressed in the kidney and testis. Expressed in the kidney exclusively by glomerular podocytes.

It is found in the cytoplasm. The protein localises to the cytoskeleton. Its subcellular location is the cell membrane. The protein resides in the cell projection. It localises to the lamellipodium. In the kidney glomerulus may play a role in linking podocyte foot processes to the glomerular basement membrane. May be involved in stabilization of F-actin by attenuating its depolymerization. Can recruit TGFB1I1 from focal adhesions to podocyte lamellipodia. The polypeptide is Pleckstrin homology domain-containing family H member 2 (Plekhh2) (Mus musculus (Mouse)).